The following is a 446-amino-acid chain: tRNA-2-methylthio-N(6)-dimethylallyladenosine synthase (446 aa).

One can recognise an MTTase N-terminal domain in the interval 3 to 120; the sequence is QKLFIKTYGC…LPEMVNSVAH (118 aa). The [4Fe-4S] cluster site is built by Cys12, Cys49, Cys83, Cys157, Cys161, and Cys164. The Radical SAM core domain maps to 143–375; the sequence is SSEGASAFVS…QQRILQFAQD (233 aa). The TRAM domain maps to 378 to 442; the sequence is RKMVGSTQRI…PNSLRGERVD (65 aa).

Belongs to the methylthiotransferase family. MiaB subfamily. In terms of assembly, monomer. [4Fe-4S] cluster is required as a cofactor.

The protein localises to the cytoplasm. The enzyme catalyses N(6)-dimethylallyladenosine(37) in tRNA + (sulfur carrier)-SH + AH2 + 2 S-adenosyl-L-methionine = 2-methylsulfanyl-N(6)-dimethylallyladenosine(37) in tRNA + (sulfur carrier)-H + 5'-deoxyadenosine + L-methionine + A + S-adenosyl-L-homocysteine + 2 H(+). In terms of biological role, catalyzes the methylthiolation of N6-(dimethylallyl)adenosine (i(6)A), leading to the formation of 2-methylthio-N6-(dimethylallyl)adenosine (ms(2)i(6)A) at position 37 in tRNAs that read codons beginning with uridine. The sequence is that of tRNA-2-methylthio-N(6)-dimethylallyladenosine synthase from Hahella chejuensis (strain KCTC 2396).